Consider the following 476-residue polypeptide: 1-aminocyclopropane-1-carboxylate synthase 4 (476 aa).

Residue Lys282 is modified to N6-(pyridoxal phosphate)lysine.

Belongs to the class-I pyridoxal-phosphate-dependent aminotransferase family. Homodimer. Requires pyridoxal 5'-phosphate as cofactor.

It carries out the reaction S-adenosyl-L-methionine = 1-aminocyclopropane-1-carboxylate + S-methyl-5'-thioadenosine + H(+). The protein operates within alkene biosynthesis; ethylene biosynthesis via S-adenosyl-L-methionine; ethylene from S-adenosyl-L-methionine: step 1/2. Functionally, catalyzes the formation of 1-aminocyclopropane-1-carboxylate, a direct precursor of ethylene in higher plants. This is 1-aminocyclopropane-1-carboxylate synthase 4 (ACS4) from Solanum lycopersicum (Tomato).